The sequence spans 391 residues: Formate-dependent phosphoribosylglycinamide formyltransferase (391 aa).

Residues 20–21 (EL) and glutamate 80 contribute to the N(1)-(5-phospho-beta-D-ribosyl)glycinamide site. Residues arginine 112, lysine 153, 158–163 (SSGKGQ), 193–196 (EGFI), and glutamate 201 contribute to the ATP site. The 190-residue stretch at 117–306 (RLAAETLGLP…EFALHVRAIL (190 aa)) folds into the ATP-grasp domain. Mg(2+) is bound by residues glutamate 265 and glutamate 277. Residues aspartate 284, lysine 354, and 361–362 (RR) each bind N(1)-(5-phospho-beta-D-ribosyl)glycinamide.

It belongs to the PurK/PurT family. In terms of assembly, homodimer.

The enzyme catalyses N(1)-(5-phospho-beta-D-ribosyl)glycinamide + formate + ATP = N(2)-formyl-N(1)-(5-phospho-beta-D-ribosyl)glycinamide + ADP + phosphate + H(+). It functions in the pathway purine metabolism; IMP biosynthesis via de novo pathway; N(2)-formyl-N(1)-(5-phospho-D-ribosyl)glycinamide from N(1)-(5-phospho-D-ribosyl)glycinamide (formate route): step 1/1. Functionally, involved in the de novo purine biosynthesis. Catalyzes the transfer of formate to 5-phospho-ribosyl-glycinamide (GAR), producing 5-phospho-ribosyl-N-formylglycinamide (FGAR). Formate is provided by PurU via hydrolysis of 10-formyl-tetrahydrofolate. The protein is Formate-dependent phosphoribosylglycinamide formyltransferase of Shewanella sp. (strain MR-7).